A 260-amino-acid chain; its full sequence is Snake venom serine protease homolog (260 aa).

Positions 1–18 (MVLVRVLANLLMLQLSYA) are cleaved as a signal peptide. The propeptide occupies 19-24 (QKSSEL). Residues 25–251 (IIGGDECNIN…HLDWIKSIIA (227 aa)) enclose the Peptidase S1 domain. 6 cysteine pairs are disulfide-bonded: cysteine 31-cysteine 165, cysteine 52-cysteine 68, cysteine 100-cysteine 258, cysteine 144-cysteine 212, cysteine 176-cysteine 191, and cysteine 202-cysteine 227. Aspartate 112 acts as the Charge relay system in catalysis. Residues asparagine 123 and asparagine 124 are each glycosylated (N-linked (GlcNAc...) asparagine). Catalysis depends on serine 206, which acts as the Charge relay system.

It belongs to the peptidase S1 family. Snake venom subfamily. In terms of tissue distribution, expressed by the venom gland.

It localises to the secreted. Functionally, snake venom serine protease homolog. May act in the hemostasis system of the prey. The polypeptide is Snake venom serine protease homolog (Protobothrops jerdonii (Jerdon's pitviper)).